A 231-amino-acid chain; its full sequence is PIAGSMVLAAILLKLGGYGIIRMMQILPTTKTDVFLPFIVLALWGAILANLTCLQQTDLKSLIAYSSVSHMGLVVAAIIIQTPWGLSGAMALMIAHGFTSSALFCLANTTYERTHTRVLILTRGFHNILPMATTWWLLINLMNIATPPTINFTSELLIISALFNWCPTTMIMLGLSMLITASYSLHMFLSTQMGPTMLSSQTEPTHSREHLLMILHIIPLVLISMKPELVI.

7 helical membrane-spanning segments follow: residues 1-21 (PIAG…YGII), 34-54 (VFLP…LTCL), 61-80 (SLIA…AIII), 84-106 (WGLS…LFCL), 128-148 (ILPM…ATPP), 156-176 (LLII…LGLS), and 211-231 (LLMI…ELVI).

This sequence belongs to the complex I subunit 4 family.

Its subcellular location is the mitochondrion membrane. The enzyme catalyses a ubiquinone + NADH + 5 H(+)(in) = a ubiquinol + NAD(+) + 4 H(+)(out). Its function is as follows. Core subunit of the mitochondrial membrane respiratory chain NADH dehydrogenase (Complex I) that is believed to belong to the minimal assembly required for catalysis. Complex I functions in the transfer of electrons from NADH to the respiratory chain. The immediate electron acceptor for the enzyme is believed to be ubiquinone. This Tropidolaemus wagleri (Wagler's pit viper) protein is NADH-ubiquinone oxidoreductase chain 4 (MT-ND4).